Consider the following 711-residue polypeptide: Ferric/cupric reductase transmembrane component 2 (711 aa).

The signal sequence occupies residues 1–23; the sequence is MHWTSILSAILLFCLSGARASPA. Topologically, residues 24-164 are extracellular; the sequence is KTVIRNKVPL…GFYANLDVGN (141 aa). Asn-85, Asn-108, Asn-120, and Asn-134 each carry an N-linked (GlcNAc...) asparagine glycan. Residues 165–185 traverse the membrane as a helical segment; that stretch reads IYGGIICAYFVAIMAFAGVLH. The Cytoplasmic segment spans residues 186–235; sequence CMNYTPFKTVLLKQKLVGYVRGYLTLPTIGSKHASDFSYFRIFTGYLPTR. A helical membrane pass occupies residues 236–256; the sequence is LEGIIILGYLVLHTVFLAYGY. The Extracellular segment spans residues 257–280; that stretch reads EYDPENIIFKSRRVQVARYVADRS. The 135-residue stretch at 280–414 folds into the Ferric oxidoreductase domain; the sequence is SGVLAFAHFP…SGIEWIYTAI (135 aa). A helical membrane pass occupies residues 281-301; it reads GVLAFAHFPLIVLFAGRNNFL. Topologically, residues 302–317 are cytoplasmic; it reads EYISGVKYTSFIMFHK. Positions 316 and 330 each coordinate heme. A helical transmembrane segment spans residues 318 to 340; it reads WLGRMMFLDAMIHGSAYTSYTVA. The N-linked (GlcNAc...) asparagine glycan is linked to Asn-341. Over 341–353 the chain is Extracellular; sequence NKTWATSKNRLYW. A helical membrane pass occupies residues 354-374; the sequence is QFGVAALCLAGTMVFFSFAVF. The Cytoplasmic portion of the chain corresponds to 375 to 377; the sequence is RKY. The helical transmembrane segment at 378-398 threads the bilayer; that stretch reads FYEAFLFLHIVLGAMFFYACW. Residues His-386 and His-400 each contribute to the heme site. The Extracellular segment spans residues 399 to 400; that stretch reads EH. The chain crosses the membrane as a helical span at residues 401 to 423; the sequence is VVSLSGIEWIYTAIAIWIVDRII. Residues 415–534 enclose the FAD-binding FR-type domain; that stretch reads AIWIVDRIIR…EGPYGSSSPV (120 aa). Residues 424–711 lie on the Cytoplasmic side of the membrane; it reads RIIKASYFGF…IEYFEEYQCW (288 aa). An FAD-binding site is contributed by 479–485; it reads HPFTVLD. NADP(+) contacts are provided by residues 526-529 and 677-678; these read GPYG and CG.

The protein belongs to the ferric reductase (FRE) family. The cofactor is FAD. It depends on heme as a cofactor.

Its subcellular location is the cell membrane. It catalyses the reaction 2 a Fe(II)-siderophore + NADP(+) + H(+) = 2 a Fe(III)-siderophore + NADPH. In terms of biological role, metalloreductase responsible for reducing extracellular iron and copper prior to import. Catalyzes the reductive uptake of Fe(3+)-salts and Fe(3+) bound to catecholate or hydroxamate siderophores. Fe(3+) is reduced to Fe(2+), which then dissociates from the siderophore and can be imported by the high-affinity Fe(2+) transport complex in the plasma membrane. Also participates in Cu(2+) reduction and Cu(+) uptake. This is Ferric/cupric reductase transmembrane component 2 (FRE2) from Saccharomyces cerevisiae (strain ATCC 204508 / S288c) (Baker's yeast).